The chain runs to 102 residues: Putative nuclear receptor corepressor 1-like protein NCOR1P1 (102 aa).

A compositionally biased stretch (polar residues) spans 1–18 (MSSSGYPPNQGAFSTEQS). The tract at residues 1 to 68 (MSSSGYPPNQ…DQNASPSKLS (68 aa)) is disordered. Residues 68–100 (SKEELIECMDRVDREIAKVEQQILKLKKKQVKV) are a coiled coil.

The protein belongs to the N-CoR nuclear receptor corepressors family.

In Homo sapiens (Human), this protein is Putative nuclear receptor corepressor 1-like protein NCOR1P1 (NCOR1P1).